A 107-amino-acid chain; its full sequence is 2Fe-2S ferredoxin CtmE (107 aa).

A 2Fe-2S ferredoxin-type domain is found at Val-3–Glu-106. Residues Cys-41, Cys-47, Cys-50, and Cys-87 each contribute to the [2Fe-2S] cluster site.

Belongs to the adrenodoxin/putidaredoxin family. [2Fe-2S] cluster is required as a cofactor.

It functions in the pathway terpene metabolism; monoterpene degradation. In terms of biological role, involved in the degradation of the cyclic monoterpene limonene. Probably part of an electron transfer system involved in the oxidation of limonene to perillyl alcohol. This chain is 2Fe-2S ferredoxin CtmE, found in Castellaniella defragrans (strain DSM 12143 / CCUG 39792 / 65Phen) (Alcaligenes defragrans).